An 886-amino-acid polypeptide reads, in one-letter code: Coatomer subunit gamma (886 aa).

HEAT repeat units follow at residues 66-103 (VEAT…SSDE), 288-325 (RELT…THPM), 327-359 (VTNC…TGNE), 360-397 (SSVE…KFPL), and 472-509 (SDPS…MVES). The disordered stretch occupies residues 592–613 (SQPLAEKKAQGKKPTGLGAPPA).

This sequence belongs to the COPG family. Oligomeric complex that consists of at least the alpha, beta, beta', gamma, delta, epsilon and zeta subunits.

It localises to the cytoplasm. The protein localises to the golgi apparatus membrane. The protein resides in the cytoplasmic vesicle. Its subcellular location is the COPI-coated vesicle membrane. Its function is as follows. The coatomer is a cytosolic protein complex that binds to dilysine motifs and reversibly associates with Golgi non-clathrin-coated vesicles, which further mediate biosynthetic protein transport from the ER, via the Golgi up to the trans Golgi network. Coatomer complex is required for budding from Golgi membranes, and is essential for the retrograde Golgi-to-ER transport of dilysine-tagged proteins. In Arabidopsis thaliana (Mouse-ear cress), this protein is Coatomer subunit gamma.